Consider the following 266-residue polypeptide: 3-deoxy-manno-octulosonate cytidylyltransferase (266 aa).

This sequence belongs to the KdsB family.

Its subcellular location is the cytoplasm. It carries out the reaction 3-deoxy-alpha-D-manno-oct-2-ulosonate + CTP = CMP-3-deoxy-beta-D-manno-octulosonate + diphosphate. The protein operates within nucleotide-sugar biosynthesis; CMP-3-deoxy-D-manno-octulosonate biosynthesis; CMP-3-deoxy-D-manno-octulosonate from 3-deoxy-D-manno-octulosonate and CTP: step 1/1. It participates in bacterial outer membrane biogenesis; lipopolysaccharide biosynthesis. Functionally, activates KDO (a required 8-carbon sugar) for incorporation into bacterial lipopolysaccharide in Gram-negative bacteria. This chain is 3-deoxy-manno-octulosonate cytidylyltransferase, found in Paraburkholderia xenovorans (strain LB400).